The chain runs to 197 residues: LexA repressor (197 aa).

A DNA-binding region (H-T-H motif) is located at residues 28 to 47 (VREIARRFRITPRGAQLHLV). Residues Ser-119 and Lys-156 each act as for autocatalytic cleavage activity in the active site.

This sequence belongs to the peptidase S24 family. As to quaternary structure, homodimer.

It carries out the reaction Hydrolysis of Ala-|-Gly bond in repressor LexA.. Functionally, represses a number of genes involved in the response to DNA damage (SOS response), including recA and lexA. In the presence of single-stranded DNA, RecA interacts with LexA causing an autocatalytic cleavage which disrupts the DNA-binding part of LexA, leading to derepression of the SOS regulon and eventually DNA repair. The chain is LexA repressor from Thermotoga neapolitana.